The following is a 143-amino-acid chain: Small ribosomal subunit protein uS12 (143 aa).

Over residues 1 to 20 (MGKPRGLRTARKLKNHRREQ) the composition is skewed to basic residues. The segment at 1–28 (MGKPRGLRTARKLKNHRREQRWHDKDYK) is disordered. Proline 62 bears the Hydroxyproline mark.

The protein belongs to the universal ribosomal protein uS12 family. Component of the 40S small ribosomal subunit.

The protein resides in the cytoplasm. It is found in the cytosol. The protein localises to the rough endoplasmic reticulum. The protein is Small ribosomal subunit protein uS12 (RPS23) of Lumbricus rubellus (Humus earthworm).